The following is a 206-amino-acid chain: Uridine kinase (206 aa).

11–18 (GGSASGKT) contributes to the ATP binding site.

This sequence belongs to the uridine kinase family.

Its subcellular location is the cytoplasm. The catalysed reaction is uridine + ATP = UMP + ADP + H(+). It carries out the reaction cytidine + ATP = CMP + ADP + H(+). The protein operates within pyrimidine metabolism; CTP biosynthesis via salvage pathway; CTP from cytidine: step 1/3. It functions in the pathway pyrimidine metabolism; UMP biosynthesis via salvage pathway; UMP from uridine: step 1/1. The protein is Uridine kinase of Lactococcus lactis subsp. lactis (strain IL1403) (Streptococcus lactis).